The primary structure comprises 180 residues: MFLHPSYRNNLFSTKCGTCDLDAKVEFRSGTVTFYRNKNGSIYNFCSFECMDKFNRTKICWFCSYHSDLVSCESGFMICTSDTYWKYSCRDKYYIRLKHDLILEDDPLTDDDYDKISESDSLPDEYKEYVVKHDSDNSDNDSDNSDNDSNNSDNDSNNSDSDSDNSNDPNNFDNPDDNPK.

Over residues aspartate 114–aspartate 136 the composition is skewed to basic and acidic residues. Residues aspartate 114–lysine 180 are disordered. Residues asparagine 137 to aspartate 146 show a composition bias toward acidic residues. A compositionally biased stretch (low complexity) spans asparagine 147–aspartate 173.

This is an uncharacterized protein from Acanthamoeba polyphaga (Amoeba).